We begin with the raw amino-acid sequence, 298 residues long: dTDP-4-dehydrorhamnose reductase (298 aa).

Residues 10 to 12 (GQV), 35 to 36 (DL), and 59 to 61 (AYT) each bind NADH. Residues 11-12 (QV), 35-36 (DL), 59-61 (AYT), and tyrosine 98 each bind NADPH. 100-101 (TD) contacts dTDP-beta-L-rhamnose. NADH is bound by residues tyrosine 124 and lysine 128. Residues tyrosine 124 and lysine 128 each coordinate NADPH. The active-site Proton donor/acceptor is tyrosine 124. Tryptophan 149 serves as a coordination point for dTDP-beta-L-rhamnose.

The protein belongs to the dTDP-4-dehydrorhamnose reductase family. In terms of assembly, homodimer. Mg(2+) serves as cofactor.

The catalysed reaction is dTDP-beta-L-rhamnose + NADP(+) = dTDP-4-dehydro-beta-L-rhamnose + NADPH + H(+). The protein operates within carbohydrate biosynthesis; dTDP-L-rhamnose biosynthesis. It participates in bacterial outer membrane biogenesis; LPS O-antigen biosynthesis. Involved in the biosynthesis of the dTDP-L-rhamnose which is an important component of lipopolysaccharide (LPS). Catalyzes the reduction of dTDP-6-deoxy-L-lyxo-4-hexulose to yield dTDP-L-rhamnose. The sequence is that of dTDP-4-dehydrorhamnose reductase from Burkholderia thailandensis (strain ATCC 700388 / DSM 13276 / CCUG 48851 / CIP 106301 / E264).